Reading from the N-terminus, the 208-residue chain is Ras-related protein RABH1b (208 aa).

16-23 (GDQSVGKT) provides a ligand contact to GTP. Positions 38–46 (YQATIGIDF) match the Effector region motif. GTP is bound by residues 64–68 (DTAGQ), 122–125 (NKTD), and 152–153 (SA). Residues Cys206 and Cys208 are each lipidated (S-geranylgeranyl cysteine). Cys208 is subject to Cysteine methyl ester.

Belongs to the small GTPase superfamily. Rab family. In terms of assembly, interacts with the C-terminus of GC5, but not with GC3. As to expression, expressed in roots, stems, leaves and flowers.

It is found in the golgi apparatus membrane. The protein localises to the cytoplasm. The protein resides in the cytosol. Protein transport. Regulator of membrane traffic from the Golgi apparatus towards the endoplasmic reticulum (ER). Binds GTP and GDP and possesses intrinsic GTPase activity. In Arabidopsis thaliana (Mouse-ear cress), this protein is Ras-related protein RABH1b (RABH1B).